The chain runs to 181 residues: Ferritin heavy chain (181 aa).

Position 1 is an N-acetylmethionine (methionine 1). Threonine 2 carries the post-translational modification N-acetylthreonine; in Ferritin heavy chain, N-terminally processed. In terms of domain architecture, Ferritin-like diiron spans 11–160; it reads QNYHQDSEAA…DHITNLRKMG (150 aa). Residues glutamate 28, glutamate 63, histidine 66, glutamate 108, and glutamine 142 each coordinate Fe cation. Serine 179 is subject to Phosphoserine.

This sequence belongs to the ferritin family. In terms of assembly, oligomer of 24 subunits. There are two types of subunits: L (light) chain and H (heavy) chain. The major chain can be light or heavy, depending on the species and tissue type. The functional molecule forms a roughly spherical shell with a diameter of 12 nm and contains a central cavity into which the insoluble mineral iron core is deposited. Interacts with NCOA4; NCOA4 promotes targeting of the iron-binding ferritin complex to autolysosomes following starvation or iron depletion.

It localises to the cytoplasm. The protein localises to the lysosome. Its subcellular location is the cytoplasmic vesicle. It is found in the autophagosome. It carries out the reaction 4 Fe(2+) + O2 + 4 H(+) = 4 Fe(3+) + 2 H2O. In terms of biological role, stores iron in a soluble, non-toxic, readily available form. Important for iron homeostasis. Has ferroxidase activity. Iron is taken up in the ferrous form and deposited as ferric hydroxides after oxidation. Also plays a role in delivery of iron to cells. Mediates iron uptake in capsule cells of the developing kidney. Delivery to lysosomes is mediated by the cargo receptor NCOA4 for autophagic degradation and release of iron. This Bos taurus (Bovine) protein is Ferritin heavy chain (FTH1).